Here is a 213-residue protein sequence, read N- to C-terminus: Proteasome subunit beta (213 aa).

The propeptide at 1–11 is removed in mature form; by autocatalysis; sequence MPEQYQESMTG. Thr-12 (nucleophile) is an active-site residue.

It belongs to the peptidase T1B family. The 20S proteasome core is composed of 14 alpha and 14 beta subunits that assemble into four stacked heptameric rings, resulting in a barrel-shaped structure. The two inner rings, each composed of seven catalytic beta subunits, are sandwiched by two outer rings, each composed of seven alpha subunits. The catalytic chamber with the active sites is on the inside of the barrel. Has a gated structure, the ends of the cylinder being occluded by the N-termini of the alpha-subunits. Is capped at one or both ends by the proteasome regulatory ATPase, PAN.

The protein localises to the cytoplasm. The enzyme catalyses Cleavage of peptide bonds with very broad specificity.. Its activity is regulated as follows. The formation of the proteasomal ATPase PAN-20S proteasome complex, via the docking of the C-termini of PAN into the intersubunit pockets in the alpha-rings, triggers opening of the gate for substrate entry. Interconversion between the open-gate and close-gate conformations leads to a dynamic regulation of the 20S proteasome proteolysis activity. In terms of biological role, component of the proteasome core, a large protease complex with broad specificity involved in protein degradation. In Methanoregula boonei (strain DSM 21154 / JCM 14090 / 6A8), this protein is Proteasome subunit beta.